A 93-amino-acid chain; its full sequence is YcgL domain-containing protein Ssed_2518 (93 aa).

A YcgL domain is found at 1 to 85; it reads MICAVYKSRR…PKVNLLEQHK (85 aa).

The protein is YcgL domain-containing protein Ssed_2518 of Shewanella sediminis (strain HAW-EB3).